Consider the following 412-residue polypeptide: Lipid droplet organization protein LDO45 (412 aa).

The Cytoplasmic segment spans residues 1–170 (MAARNRRKNN…TVEKLNALQN (170 aa)). Residues 171-191 (SLYEVFWIIFIYLNYWFPNVG) traverse the membrane as a helical segment. The Lumenal portion of the chain corresponds to 192 to 247 (DYVSNTFGQQDSIIIRISLSKSHFRALREKSSQKVQQAVKNIYFCFQEKPYLTAFK). Residues 248–268 (VSFAIGLVIPCSLLFLIMVST) traverse the membrane as a helical segment. Residues 269–271 (ATF) are Cytoplasmic-facing. Residues 272–292 (FFFVYLTLFVVIGFFSSLFII) traverse the membrane as a helical segment. Position 293 (Pro293) is a topological domain, lumenal. The helical transmembrane segment at 294-314 (LLGISFVFAIGVVSFGFCSNM) threads the bilayer. The Cytoplasmic segment spans residues 315 to 412 (SFKMAQLIYV…NKAGNKFQLS (98 aa)). The segment at 347 to 374 (QEPQEPLSTLRPVSNPTIPSPLRQTARP) is disordered. A compositionally biased stretch (polar residues) spans 357 to 373 (RPVSNPTIPSPLRQTAR).

In terms of assembly, interacts specifically with the seipin complex FLD1-LDB16. Only a fraction appears to associate with the seipin core components, suggesting that it may be an ancillary subunit of the complex.

It is found in the endoplasmic reticulum membrane. It localises to the lipid droplet. Functionally, involved in lipid droplet (LD) organization. Modulates triglyceride (TAG) storage by reducing DGA1 LD localization. Promotes LD targeting of some proteins, including PDR16. The chain is Lipid droplet organization protein LDO45 from Saccharomyces cerevisiae (strain ATCC 204508 / S288c) (Baker's yeast).